Here is a 500-residue protein sequence, read N- to C-terminus: MSPGLLLLGSAVLLAFGLCCTFVHRARSRYEHIPGPPRPSFLLGHLPCFWKKDEVGGRVLQDVFLDWAKKYGPVVRVNVFHKTSVIVTSPESVKKFLMSTKYNKDSKMYRALQTVFGERLFGQGLVSECNYERWHKQRRVIDLAFSRSSLVSLMETFNEKAEQLVEILEAKADGQTPVSMQDMLTYTAMDILAKAAFGMETSMLLGAQKPLSQAVKLMLEGITASRNTLAKFLPGKRKQLREVRESIRFLRQVGRDWVQRRREALKRGEEVPADILTQILKAEEGAQDDEGLLDNFVTFFIAGHETSANHLAFTVMELSRQPEIVARLQAEVDEVIGSKRYLDFEDLGRLQYLSQVLKESLRLYPPAWGTFRLLEEETLIDGVRVPGNTPLLFSTYVMGRMDTYFEDPLTFNPDRFGPGAPKPRFTYFPFSLGHRSCIGQQFAQMEVKVVMAKLLQRLEFRLVPGQRFGLQEQATLKPLDPVLCTLRPRGWQPAPPPPPC.

The chain crosses the membrane as a helical span at residues 3-23 (PGLLLLGSAVLLAFGLCCTFV). C437 provides a ligand contact to heme.

This sequence belongs to the cytochrome P450 family. The cofactor is heme. As to expression, expressed in brain. The mRNA was broadly distributed with higher levels in gray matter zones and lower levels in regions rich in white matter. Not detected in fetal sample but its expression increases linearly with age.

The protein resides in the endoplasmic reticulum membrane. The protein localises to the microsome membrane. It is found in the postsynapse. Its subcellular location is the presynapse. It localises to the cell projection. The protein resides in the dendrite. It carries out the reaction cholesterol + reduced [NADPH--hemoprotein reductase] + O2 = (24S)-hydroxycholesterol + oxidized [NADPH--hemoprotein reductase] + H2O + H(+). The enzyme catalyses cholestanol + reduced [NADPH--hemoprotein reductase] + O2 = (24S)-hydroxycholestanol + oxidized [NADPH--hemoprotein reductase] + H2O + H(+). The catalysed reaction is 7-dehydrocholesterol + reduced [NADPH--hemoprotein reductase] + O2 = cholesta-5,7-dien-3beta,24S-diol + oxidized [NADPH--hemoprotein reductase] + H2O + H(+). It catalyses the reaction 7-dehydrocholesterol + reduced [NADPH--hemoprotein reductase] + O2 = cholesta-5,7-dien-3beta,25-diol + oxidized [NADPH--hemoprotein reductase] + H2O + H(+). It carries out the reaction desmosterol + reduced [NADPH--hemoprotein reductase] + O2 = (24Z),26-hydroxydesmosterol + oxidized [NADPH--hemoprotein reductase] + H2O + H(+). The enzyme catalyses desmosterol + reduced [NADPH--hemoprotein reductase] + O2 = (24S)-25-epoxycholesterol + oxidized [NADPH--hemoprotein reductase] + H2O + H(+). The catalysed reaction is 4beta-hydroxycholesterol + reduced [NADPH--hemoprotein reductase] + O2 = 4beta,24S-dihydroxycholesterol + oxidized [NADPH--hemoprotein reductase] + H2O + H(+). It catalyses the reaction (24S)-hydroxycholesterol + reduced [NADPH--hemoprotein reductase] + O2 = (24S,25R)-24,26-dihydroxycholesterol + oxidized [NADPH--hemoprotein reductase] + H2O + H(+). It carries out the reaction (24S)-hydroxycholesterol + reduced [NADPH--hemoprotein reductase] + O2 = 24S,25-dihydroxycholesterol + oxidized [NADPH--hemoprotein reductase] + H2O + H(+). The enzyme catalyses 7alpha-hydroxycholesterol + reduced [NADPH--hemoprotein reductase] + O2 = (24S)-7alpha-dihydroxycholesterol + oxidized [NADPH--hemoprotein reductase] + H2O + H(+). The catalysed reaction is progesterone + reduced [NADPH--hemoprotein reductase] + O2 = 17alpha-hydroxyprogesterone + oxidized [NADPH--hemoprotein reductase] + H2O + H(+). It catalyses the reaction testosterone + reduced [NADPH--hemoprotein reductase] + O2 = 16beta,17beta-dihydroxyandrost-4-en-3-one + oxidized [NADPH--hemoprotein reductase] + H2O + H(+). It carries out the reaction testosterone + reduced [NADPH--hemoprotein reductase] + O2 = 2-hydroxytestosterone + oxidized [NADPH--hemoprotein reductase] + H2O + H(+). The enzyme catalyses testosterone + reduced [NADPH--hemoprotein reductase] + O2 = 6beta,17beta-dihydroxyandrost-4-en-3-one + oxidized [NADPH--hemoprotein reductase] + H2O + H(+). It functions in the pathway steroid metabolism; cholesterol degradation. The protein operates within lipid metabolism; C21-steroid hormone metabolism. Functionally, P450 monooxygenase that plays a major role in cholesterol homeostasis in the brain. Primarily catalyzes the hydroxylation (with S stereochemistry) at C-24 of cholesterol side chain, triggering cholesterol diffusion out of neurons and its further degradation. By promoting constant cholesterol elimination in neurons, may activate the mevalonate pathway and coordinate the synthesis of new cholesterol and nonsterol isoprenoids involved in synaptic activity and learning. Further hydroxylates cholesterol derivatives and hormone steroids on both the ring and side chain of these molecules, converting them into active oxysterols involved in lipid signaling and biosynthesis. Acts as an epoxidase converting cholesta-5,24-dien-3beta-ol/desmosterol into (24S),25-epoxycholesterol, an abundant lipid ligand of nuclear NR1H2 and NR1H3 receptors shown to promote neurogenesis in developing brain. May also catalyze the oxidative metabolism of xenobiotics, such as clotrimazole. This is Cholesterol 24-hydroxylase from Homo sapiens (Human).